The following is a 110-amino-acid chain: Small ribosomal subunit protein bS16 (110 aa).

Positions 81-104 (VRPAEVLGKQKQEKERSAKKKDAT) are enriched in basic and acidic residues. The segment at 81–110 (VRPAEVLGKQKQEKERSAKKKDATASETSE) is disordered.

Belongs to the bacterial ribosomal protein bS16 family.

The chain is Small ribosomal subunit protein bS16 from Prochlorococcus marinus (strain NATL1A).